The following is a 690-amino-acid chain: MEKYDEDIALQASKFLEDLSLCDGHSRLYGPVGDMLLSNDHILVADHRGRRLNGSLTQYLPHSSSDKVYPLGSSQLRSMNGSRGDGYMDEGIYKSDVALPCYSGISEKNKRYSAELYRHSCGNSFEGVPISAKQGGITALYSGGKMSNSCMSATSPRSSMASSASSSQEHSKYSSPRSSISSNALSLDKFSSPRSSLVVPGQQEKYTSPRSSLGQYEGGVLSPRSSYASTTSDTSKHSSPRASLTSYDCGSKPSSNRTSGISMGYDQRHISPRSSTASQYSCTTSPRSSYSDSRYVPSGNPDLDGVGGHGSLVSPRSSMCLQEGRSATLGSCNPSVVSPRSSISSHSSRSSRSSRGSMGAYTDLTVPSPRSSMLGTSLQEETLVQDLGEACHYKVLTQSPPRQEQHQTITSSHDLNSGAVASYNFSSAKGSATVHRFKLPYQVTPSRESGPSQAERRLEALTLELEKELELHMKKEYFGICIKCGKGVYGASQACQAMGNLYHTNCFTCCSCGRRLRGKAFYNVNGKVYCEEDFLYSGFQQTADKCFVCGHLIMEMILQALGKSYHPGCFRCVVCNECLDGVPFTVDVENNIYCVKDYHTVFAPKCASCNQPILPAQGSEETIRVVSMDKDYHVECYHCEDCQLQLNDEEGRRCYPLEGHLLCHSCHIRRLSVNVPPHQPPSYPMHVTEL.

2 disordered regions span residues 151-316 and 328-372; these read MSAT…VSPR and TLGS…PRSS. Low complexity predominate over residues 152–186; that stretch reads SATSPRSSMASSASSSQEHSKYSSPRSSISSNALS. Composition is skewed to polar residues over residues 204–214, 223–233, 240–261, and 272–292; these read EKYTSPRSSLG, PRSSYASTTSD, PRAS…TSGI, and PRSS…SYSD. Over residues 335-357 the composition is skewed to low complexity; it reads SVVSPRSSISSHSSRSSRSSRGS. 3 consecutive LIM zinc-binding domains span residues 479-540, 544-603, and 604-673; these read GICI…SGFQ, DKCF…TVFA, and PKCA…RLSV.

This sequence belongs to the zyxin/ajuba family. As to quaternary structure, interacts with prickle3.

The protein localises to the cell junction. The protein resides in the adherens junction. It is found in the nucleus. Functionally, may monitor slit diaphragm protein assembly, a specialized adherens junction characteristic of podocytes. In case of podocyte injury, it shuttles into the nucleus and acts as a transcription regulator. Plays a role in the regulation of cell morphology and cytoskeletal organization. Acts as a transcriptional corepressor for snai1 and snai2/slug and plays a role in regulating neural crest development. Involved in the organization of the basal body. Involved in cilia growth and positioning. This Xenopus laevis (African clawed frog) protein is Wilms tumor protein 1-interacting protein homolog (wtip).